Reading from the N-terminus, the 496-residue chain is Beta-N-acetylhexosaminidase (496 aa).

Residue E298 is the Proton donor of the active site.

The protein belongs to the glycosyl hydrolase 20 family.

The enzyme catalyses Hydrolysis of terminal non-reducing N-acetyl-D-hexosamine residues in N-acetyl-beta-D-hexosaminides.. The protein operates within glycan degradation; chitin degradation. Catalyzes the cleavage of beta-N-acetylglucosaminides and beta-N-acetylgalactosaminides. Also catalyzes the hydrolysis of N-acetylchitooligomers. May be involved in chitin degradation. It is not able to cleave beta-glucosides. This chain is Beta-N-acetylhexosaminidase (hex20), found in Cellulomonas fimi.